Here is an 83-residue protein sequence, read N- to C-terminus: Late seed maturation protein P8B6 (83 aa).

Basic and acidic residues-rich tracts occupy residues 1-18 (MASQQEKKQLDERAKKGE) and 37-51 (AEGRSRGGNTRKEQL). The interval 1–83 (MASQQEKKQL…DAEDEPSTRT (83 aa)) is disordered. Positions 73-83 (EDAEDEPSTRT) are enriched in acidic residues.

This sequence belongs to the small hydrophilic plant seed protein family.

Its subcellular location is the cytoplasm. In terms of biological role, this protein may play a role in equipping the seed for survival, maintaining a minimal level of hydration in the dry organism and preventing the denaturation of cytoplasmic components, or may play a role during imbibition by controlling water uptake. In Raphanus sativus (Radish), this protein is Late seed maturation protein P8B6.